Consider the following 404-residue polypeptide: XK-related protein 8 (404 aa).

8 consecutive transmembrane segments (helical) span residues 14 to 34 (FVFS…DVWL), 44 to 64 (VTWF…VQTF), 169 to 189 (AVQF…VVDY), 209 to 229 (LIYF…LALC), 232 to 252 (VLSG…ALWA), 262 to 282 (SVAG…FSWF), 293 to 313 (SAIY…TWWC), and 324 to 344 (ALAL…FKAL).

The protein belongs to the XK family.

Its subcellular location is the cell membrane. It carries out the reaction a 1,2-diacyl-sn-glycero-3-phospho-L-serine(in) = a 1,2-diacyl-sn-glycero-3-phospho-L-serine(out). Phospholipid scramblase that promotes phosphatidylserine exposure on apoptotic cell surface, possibly by mediating phospholipid scrambling. Phosphatidylserine is a specific marker only present at the surface of apoptotic cells and acts as a specific signal for engulfment. This Gasterosteus aculeatus (Three-spined stickleback) protein is XK-related protein 8.